The following is a 310-amino-acid chain: Deoxyribonuclease gamma (310 aa).

An N-terminal signal peptide occupies residues 1–25 (MSLYPASPYLASLLLFILALHGALS). The Bipartite nuclear localization signal signature appears at 40 to 56 (KKENHNAMDIIVKIIKR). Catalysis depends on residues E105 and H160. The cysteines at positions 199 and 236 are disulfide-linked. Residues 289–310 (SRAFTNSRKSVSLKKKKKGSRS) are not required for free DNA-nuclease activity but required for activity towards liposome-coated DNA. Positions 301-307 (LKKKKKG) match the Nuclear localization signal motif.

It belongs to the DNase I family. Monomer. The cofactor is Ca(2+). Requires Mg(2+) as cofactor. In terms of processing, seems to be synthesized as an inactive precursor protein and converted into an active mature enzyme by removal of the N-terminal precursor peptide during apoptosis. Post-translationally, poly-ADP-ribosylated by PARP1. ADP-ribosylation negatively regulates enzymatic activity during apoptosis. Detected at high levels in spleen, lymph nodes, thymus and liver. Observed also in kidney and testis, but not in brain or heart.

It localises to the nucleus. It is found in the secreted. Its activity is regulated as follows. Inhibited by zinc. Its function is as follows. Has DNA hydrolytic activity. Is capable of both single- and double-stranded DNA cleavage, producing DNA fragments with 3'-OH ends. Can cleave chromatin to nucleosomal units and cleaves nucleosomal and liposome-coated DNA. Acts in internucleosomal DNA fragmentation (INDF) during apoptosis and necrosis. The role in apoptosis includes myogenic and neuronal differentiation, and BCR-mediated clonal deletion of self-reactive B cells. Is active on chromatin in apoptotic cell-derived membrane-coated microparticles and thus suppresses anti-DNA autoimmunity. Together with DNASE1, plays a key role in degrading neutrophil extracellular traps (NETs). NETs are mainly composed of DNA fibers and are released by neutrophils to bind pathogens during inflammation. Degradation of intravascular NETs by DNASE1 and DNASE1L3 is required to prevent formation of clots that obstruct blood vessels and cause organ damage following inflammation. This is Deoxyribonuclease gamma (Dnase1l3) from Rattus norvegicus (Rat).